Reading from the N-terminus, the 416-residue chain is Transmembrane protease serine 11B (416 aa).

At 1–17 (MYRHGISSQRSWPLWTT) the chain is on the cytoplasmic side. A helical; Signal-anchor for type II membrane protein transmembrane segment spans residues 18–38 (IFIFLGVAAILGVTIGLLVHF). Residues 39–416 (LAVEKTYYYQ…RNWITSKTGL (378 aa)) are Extracellular-facing. Residues 43–160 (KTYYYQGDFH…ASIKLMEISK (118 aa)) enclose the SEA domain. Asn-72 and Asn-107 each carry an N-linked (GlcNAc...) asparagine glycan. A Peptidase S1 domain is found at 185 to 415 (IVNGKSSLEG…YRNWITSKTG (231 aa)). Cysteines 210 and 226 form a disulfide. Residues His-225 and Asp-270 each act as charge relay system in the active site. Asn-315 carries N-linked (GlcNAc...) asparagine glycosylation. Cystine bridges form between Cys-335-Cys-351 and Cys-362-Cys-391. The Charge relay system role is filled by Ser-366.

It belongs to the peptidase S1 family.

The protein resides in the cell membrane. Inhibited by aprotinin, leupeptin, benzamidine, SERPINA1, SPINT1 and SPINT2. Its function is as follows. Serine protease. In Homo sapiens (Human), this protein is Transmembrane protease serine 11B (TMPRSS11B).